A 321-amino-acid chain; its full sequence is Olfactory receptor 51V1 (321 aa).

The Extracellular segment spans residues 1-34; sequence MFLSSRMITSVSPSTSTNSSFLLTGFSGMEQQYP. N18 carries N-linked (GlcNAc...) asparagine glycosylation. The chain crosses the membrane as a helical span at residues 35–55; the sequence is WLSIPFSSIYAMVLLGNCMVL. Residues 56–63 lie on the Cytoplasmic side of the membrane; that stretch reads HVIWTEPS. A helical membrane pass occupies residues 64 to 84; it reads LHQPMFYFLSMLALTDLCMGL. Over 85–108 the chain is Extracellular; sequence STVYTVLGILWGIIREISLDSCIA. The cysteines at positions 106 and 188 are disulfide-linked. The chain crosses the membrane as a helical span at residues 109-129; that stretch reads QSYFIHGLSFMESSVLLTMAF. The Cytoplasmic portion of the chain corresponds to 130–148; it reads DRYIAICNPLRYSSILTNS. The chain crosses the membrane as a helical span at residues 149–169; sequence RIIKIGLTIIGRSFFFITPPI. At 170–205 the chain is on the extracellular side; that stretch reads ICLKFFNYCHFHILSHSFCLHQDLLRLACSDIRFNS. A helical transmembrane segment spans residues 206–226; the sequence is YYALMLVICILLLDAILILFS. The Cytoplasmic portion of the chain corresponds to 227–246; the sequence is YILILKSVLAVASQEERHKL. The helical transmembrane segment at 247–267 threads the bilayer; sequence FQTCISHICAVLVFYIPIISL. Residues 268–282 are Extracellular-facing; sequence TMVHRFGKHLSPVAH. Residues 283 to 303 form a helical membrane-spanning segment; the sequence is VLIGNIYILFPPLMNPIIYSV. Residues 304-321 lie on the Cytoplasmic side of the membrane; it reads KTQQIHTRMLRLFSLKRY.

Belongs to the G-protein coupled receptor 1 family.

The protein resides in the cell membrane. In terms of biological role, odorant receptor. The sequence is that of Olfactory receptor 51V1 (OR51V1) from Homo sapiens (Human).